The following is a 995-amino-acid chain: Endo-beta-N-acetylglucosaminidase EndoS (995 aa).

A signal peptide spans 1 to 36 (MDKHLLVKRTLGCVCAATLMGAALATHHDSLNTVKA). The region spanning 112 to 432 (SLYGGYFRTW…KDATDNIFHS (321 aa)) is the GH18 domain. A glycoprotein-binding residues include His151, Trp153, and Arg186. Glu235 acts as the Proton donor in catalysis. Residues Asp237, Gln303, Tyr305, Glu349, Glu350, Asn356, and Tyr402 each coordinate a glycoprotein. LRR repeat units follow at residues 437–460 (SKALKTVMLKDKSYDLIDEKDFPD), 478–503 (LERFNGTLRLDNPAIQSLEGLNKFKK), 562–585 (LTGLKELDLSGFDRETLAGLDAAT), and 586–609 (LTSLEKVDISGNKLDLAPGTENRQ). The segment at 765-923 (MVNLAEGATV…VPELQILGYP (159 aa)) is carbohydrate-binding module (CBM). Ca(2+)-binding residues include Lys786, Asp789, Gln791, Pro915, and Glu916. Positions 924-995 (LPNADTIMKT…CIEKRQLLKK (72 aa)) are three-helix bundle (3H).

It belongs to the glycosyl hydrolase 18 family. Cleaved by SpeB protease; leading to loss of endoglucosidase activity. EndoS is produced and secreted prior to SpeB, suggesting that it is degraded after acting as a host immune evasion factor.

It is found in the secreted. The protein localises to the host extracellular space. It carries out the reaction an N(4)-(oligosaccharide-(1-&gt;3)-[oligosaccharide-(1-&gt;6)]-beta-D-Man-(1-&gt;4)-beta-D-GlcNAc-(1-&gt;4)-alpha-D-GlcNAc)-L-asparaginyl-[protein] + H2O = an oligosaccharide-(1-&gt;3)-[oligosaccharide-(1-&gt;6)]-beta-D-Man-(1-&gt;4)-D-GlcNAc + N(4)-(N-acetyl-beta-D-glucosaminyl)-L-asparaginyl-[protein]. Its function is as follows. Endoglucosidase that acts as a host immune evasion factor by mediating hydrolysis of the N-linked glycan from the Fc region of host immunoglobulin-gamma (IgG) during infection. Specifically catalyzes the hydrolysis of the beta-1,4 linkage between the first two N-acetylglucosamine residues of the complex-type N-linked glycan located on 'Asn-297' of the Fc region of IgG antibodies (IGHG1, IGHG2, IGHG3 or IGHG4), thereby preventing interaction between IgGs and Fc receptors and ability to activate the complement pathway. Shows a specificity for biantennary complex type N-glycans; does neither cleave larger complex type glycans nor oligomannose and nor hybrid-type glycans. Specifically acts on IgGs; does not act on immunoglobulin alpha, beta, delta or mu. The polypeptide is Endo-beta-N-acetylglucosaminidase EndoS (Streptococcus pyogenes serotype M1).